We begin with the raw amino-acid sequence, 385 residues long: Probable tRNA sulfurtransferase (385 aa).

One can recognise a THUMP domain in the interval 57–161; that stretch reads NESIKRLSNV…NKNAYVWSNK (105 aa). ATP is bound by residues 181-182, 206-207, R263, G285, and Q294; these read ML and YY.

It belongs to the ThiI family.

It localises to the cytoplasm. The catalysed reaction is [ThiI sulfur-carrier protein]-S-sulfanyl-L-cysteine + a uridine in tRNA + 2 reduced [2Fe-2S]-[ferredoxin] + ATP + H(+) = [ThiI sulfur-carrier protein]-L-cysteine + a 4-thiouridine in tRNA + 2 oxidized [2Fe-2S]-[ferredoxin] + AMP + diphosphate. The enzyme catalyses [ThiS sulfur-carrier protein]-C-terminal Gly-Gly-AMP + S-sulfanyl-L-cysteinyl-[cysteine desulfurase] + AH2 = [ThiS sulfur-carrier protein]-C-terminal-Gly-aminoethanethioate + L-cysteinyl-[cysteine desulfurase] + A + AMP + 2 H(+). It participates in cofactor biosynthesis; thiamine diphosphate biosynthesis. Catalyzes the ATP-dependent transfer of a sulfur to tRNA to produce 4-thiouridine in position 8 of tRNAs, which functions as a near-UV photosensor. Also catalyzes the transfer of sulfur to the sulfur carrier protein ThiS, forming ThiS-thiocarboxylate. This is a step in the synthesis of thiazole, in the thiamine biosynthesis pathway. The sulfur is donated as persulfide by IscS. The protein is Probable tRNA sulfurtransferase of Clostridium botulinum (strain Alaska E43 / Type E3).